The sequence spans 187 residues: Oleosin Zm-II (187 aa).

At alanine 2 the chain carries N-acetylalanine. Positions 2–51 (ADRDRSGIYGGAHATYGQQQQQGGGGRPMGEQVKKGMLHDKGPTASQALT) are polar. The interval 17–42 (YGQQQQQGGGGRPMGEQVKKGMLHDK) is disordered. The span at 33–42 (QVKKGMLHDK) shows a compositional bias: basic and acidic residues. A run of 3 helical transmembrane segments spans residues 50–70 (LTVA…GLAL), 83–103 (VFLI…TAVM), and 104–124 (GFLT…CLAN). The tract at residues 52–123 (VATLFPLGGL…GGLSSLTCLA (72 aa)) is hydrophobic. Residues 155–169 (TAQAGQAIQGRAQEA) are compositionally biased toward low complexity. Residues 155–187 (TAQAGQAIQGRAQEAGTGGGAGAGAGGGGRASS) are disordered. A compositionally biased stretch (gly residues) spans 170–187 (GTGGGAGAGAGGGGRASS).

Belongs to the oleosin family. In terms of processing, the N-terminus is blocked. As to expression, found in embryonic axis, scutellum, and aleurone layer.

The protein resides in the lipid droplet. The protein localises to the membrane. In terms of biological role, may have a structural role to stabilize the lipid body during desiccation of the seed by preventing coalescence of the oil. Probably interacts with both lipid and phospholipid moieties of lipid bodies. May also provide recognition signals for specific lipase anchorage in lipolysis during seedling growth. The protein is Oleosin Zm-II (OLE18) of Zea mays (Maize).